The following is a 121-amino-acid chain: Large ribosomal subunit protein bL19 (121 aa).

The protein belongs to the bacterial ribosomal protein bL19 family.

In terms of biological role, this protein is located at the 30S-50S ribosomal subunit interface and may play a role in the structure and function of the aminoacyl-tRNA binding site. This Chlamydia pneumoniae (Chlamydophila pneumoniae) protein is Large ribosomal subunit protein bL19 (rplS).